The following is a 510-amino-acid chain: Ferredoxin--nitrite reductase (510 aa).

Cys396, Cys402, Cys437, and Cys441 together coordinate [4Fe-4S] cluster. Cys441 contributes to the siroheme binding site.

This sequence belongs to the nitrite and sulfite reductase 4Fe-4S domain family.

It catalyses the reaction 6 oxidized [2Fe-2S]-[ferredoxin] + NH4(+) + 2 H2O = nitrite + 6 reduced [2Fe-2S]-[ferredoxin] + 8 H(+). This Leptolyngbya laminosa (Phormidium laminosum) protein is Ferredoxin--nitrite reductase (nirA).